Reading from the N-terminus, the 211-residue chain is Large ribosomal subunit protein uL3 (211 aa).

Residues Ala-122–Gly-147 form a disordered region.

The protein belongs to the universal ribosomal protein uL3 family. Part of the 50S ribosomal subunit. Forms a cluster with proteins L14 and L19.

Its function is as follows. One of the primary rRNA binding proteins, it binds directly near the 3'-end of the 23S rRNA, where it nucleates assembly of the 50S subunit. The sequence is that of Large ribosomal subunit protein uL3 from Geobacillus sp. (strain WCH70).